Reading from the N-terminus, the 409-residue chain is Protein a6 (409 aa).

Serine 86 bears the Phosphoserine mark. Over residues 106–120 (RAHRTGRRQAPRRAA) the composition is skewed to basic residues. The tract at residues 106–165 (RAHRTGRRQAPRRAATHSYPVTDSILITSDDEHNEQEPSSTARVRSQLSMRSPPPLAPLT) is disordered. Threonine 133 carries the phosphothreonine modification. Serine 134 is subject to Phosphoserine. The span at 142-155 (EPSSTARVRSQLSM) shows a compositional bias: polar residues.

This Drosophila melanogaster (Fruit fly) protein is Protein a6 (a6).